A 339-amino-acid chain; its full sequence is Beta-ketoacyl-[acyl-carrier-protein] synthase III (339 aa).

Residues Cys-119 and His-262 contribute to the active site. The segment at 263–267 (QANQR) is ACP-binding. Asn-292 is a catalytic residue.

The protein belongs to the thiolase-like superfamily. FabH family. As to quaternary structure, homodimer.

Its subcellular location is the cytoplasm. It carries out the reaction malonyl-[ACP] + acetyl-CoA + H(+) = 3-oxobutanoyl-[ACP] + CO2 + CoA. Its pathway is lipid metabolism; fatty acid biosynthesis. Catalyzes the condensation reaction of fatty acid synthesis by the addition to an acyl acceptor of two carbons from malonyl-ACP. Catalyzes the first condensation reaction which initiates fatty acid synthesis and may therefore play a role in governing the total rate of fatty acid production. Possesses both acetoacetyl-ACP synthase and acetyl transacylase activities. Its substrate specificity determines the biosynthesis of branched-chain and/or straight-chain of fatty acids. This chain is Beta-ketoacyl-[acyl-carrier-protein] synthase III, found in Prochlorococcus marinus (strain MIT 9313).